A 331-amino-acid chain; its full sequence is Ketol-acid reductoisomerase (NADP(+)) (331 aa).

In terms of domain architecture, KARI N-terminal Rossmann spans 2-182; it reads AKVYYDEDAN…GGTKGGVLET (181 aa). Residues 25 to 28, Ser51, Ser53, and 83 to 86 contribute to the NADP(+) site; these read YGSQ and DEKQ. The active site involves His108. Gly134 contacts NADP(+). Positions 183–328 constitute a KARI C-terminal knotted domain; the sequence is TFKDETETDL…VELRAMMPWL (146 aa). Residues Asp191, Glu195, Glu227, and Glu231 each coordinate Mg(2+). Ser252 provides a ligand contact to substrate.

This sequence belongs to the ketol-acid reductoisomerase family. Requires Mg(2+) as cofactor.

It carries out the reaction (2R)-2,3-dihydroxy-3-methylbutanoate + NADP(+) = (2S)-2-acetolactate + NADPH + H(+). The catalysed reaction is (2R,3R)-2,3-dihydroxy-3-methylpentanoate + NADP(+) = (S)-2-ethyl-2-hydroxy-3-oxobutanoate + NADPH + H(+). It functions in the pathway amino-acid biosynthesis; L-isoleucine biosynthesis; L-isoleucine from 2-oxobutanoate: step 2/4. It participates in amino-acid biosynthesis; L-valine biosynthesis; L-valine from pyruvate: step 2/4. Its function is as follows. Involved in the biosynthesis of branched-chain amino acids (BCAA). Catalyzes an alkyl-migration followed by a ketol-acid reduction of (S)-2-acetolactate (S2AL) to yield (R)-2,3-dihydroxy-isovalerate. In the isomerase reaction, S2AL is rearranged via a Mg-dependent methyl migration to produce 3-hydroxy-3-methyl-2-ketobutyrate (HMKB). In the reductase reaction, this 2-ketoacid undergoes a metal-dependent reduction by NADPH to yield (R)-2,3-dihydroxy-isovalerate. This chain is Ketol-acid reductoisomerase (NADP(+)), found in Clostridium novyi (strain NT).